The following is a 1186-amino-acid chain: Chromosome partition protein Smc (1186 aa).

32-39 (PNGSGKSN) provides a ligand contact to ATP. Coiled-coil stretches lie at residues 167 to 206 (VLKY…EPLK) and 259 to 481 (SSAI…QAYQ). One can recognise an SMC hinge domain in the interval 519–637 (GIRGAVLELI…EDLKGANELA (119 aa)). Coiled coils occupy residues 672–864 (LLGR…MSSS), 893–943 (RDQR…NLLQ), and 990–1029 (SIDE…DEEM).

It belongs to the SMC family. As to quaternary structure, homodimer.

The protein resides in the cytoplasm. Its function is as follows. Required for chromosome condensation and partitioning. This is Chromosome partition protein Smc from Bacillus subtilis (strain 168).